We begin with the raw amino-acid sequence, 163 residues long: 6,7-dimethyl-8-ribityllumazine synthase (163 aa).

Residues Phe27, 58–60, and 87–89 each bind 5-amino-6-(D-ribitylamino)uracil; these read ALE and CVV. 92 to 93 contacts (2S)-2-hydroxy-3-oxobutyl phosphate; it reads DT. The active-site Proton donor is His95. Asn120 is a 5-amino-6-(D-ribitylamino)uracil binding site. Arg134 is a (2S)-2-hydroxy-3-oxobutyl phosphate binding site.

The protein belongs to the DMRL synthase family.

It catalyses the reaction (2S)-2-hydroxy-3-oxobutyl phosphate + 5-amino-6-(D-ribitylamino)uracil = 6,7-dimethyl-8-(1-D-ribityl)lumazine + phosphate + 2 H2O + H(+). It functions in the pathway cofactor biosynthesis; riboflavin biosynthesis; riboflavin from 2-hydroxy-3-oxobutyl phosphate and 5-amino-6-(D-ribitylamino)uracil: step 1/2. Catalyzes the formation of 6,7-dimethyl-8-ribityllumazine by condensation of 5-amino-6-(D-ribitylamino)uracil with 3,4-dihydroxy-2-butanone 4-phosphate. This is the penultimate step in the biosynthesis of riboflavin. The sequence is that of 6,7-dimethyl-8-ribityllumazine synthase from Rhodopseudomonas palustris (strain BisA53).